Reading from the N-terminus, the 293-residue chain is GTP cyclohydrolase FolE2 (293 aa).

The protein belongs to the GTP cyclohydrolase IV family.

The enzyme catalyses GTP + H2O = 7,8-dihydroneopterin 3'-triphosphate + formate + H(+). The protein operates within cofactor biosynthesis; 7,8-dihydroneopterin triphosphate biosynthesis; 7,8-dihydroneopterin triphosphate from GTP: step 1/1. Converts GTP to 7,8-dihydroneopterin triphosphate. This is GTP cyclohydrolase FolE2 from Pseudomonas entomophila (strain L48).